The sequence spans 148 residues: uncharacterized protein (148 aa).

2 CBS domains span residues 8–68 (MTAD…PNSQ) and 74–130 (MTEK…ERAG). Positions 127 to 148 (ERAGSALSDISEGDNREEGFFH) are disordered. Over residues 139–148 (GDNREEGFFH) the composition is skewed to basic and acidic residues.

This is an uncharacterized protein from Bacillus subtilis (strain 168).